The chain runs to 2531 residues: Serine/threonine-protein kinase ATR (2531 aa).

Positions 1490 to 2067 (LIVKVAETFG…MWQSAYLLRQ (578 aa)) constitute an FAT domain. In terms of domain architecture, PI3K/PI4K catalytic spans 2192-2512 (FSDKVKVLHS…VSQLASSLIE (321 aa)). The segment at 2198-2204 (VLHSNTK) is G-loop. The interval 2368–2376 (GLGDRHTKN) is catalytic loop. The segment at 2387-2411 (HVDFDMIFNKGETLGTPELVPFRLT) is activation loop. In terms of domain architecture, FATC spans 2499–2531 (HPMQVSQLASSLIELATSEEKLSEMYLGWMATL).

It belongs to the PI3/PI4-kinase family. ATM subfamily. Mn(2+) is required as a cofactor.

It is found in the nucleus. It catalyses the reaction L-seryl-[protein] + ATP = O-phospho-L-seryl-[protein] + ADP + H(+). The catalysed reaction is L-threonyl-[protein] + ATP = O-phospho-L-threonyl-[protein] + ADP + H(+). Functionally, serine/threonine protein kinase which activates checkpoint signaling upon genotoxic stresses such as ionizing radiation (IR), ultraviolet light (UV), or DNA replication stalling, thereby acting as a DNA damage sensor. Recognizes the substrate consensus sequence [ST]-Q. Phosphorylates various proteins, which collectively inhibits DNA replication and mitosis and promotes DNA repair and recombination. Prevents mitotic catastrophe by functioning in the S-phase checkpoint and cooperating with atm-1 in the checkpoint response to double-strand breaks (DSBs) after ionizing radiation (IR) to induce cell cycle arrest or apoptosis via the cep-1/p53 pathway. In response to ionizing radiation, probably required for the association between the brc-1-brd-1 heterodimer and rad-51 and let-70 in order to activate E3-ubiquitin ligase activity of the heterodimer and induce ubiquitination at DNA damage sites. The sequence is that of Serine/threonine-protein kinase ATR from Caenorhabditis elegans.